We begin with the raw amino-acid sequence, 729 residues long: Hydroxamate siderophore receptor FhuE (729 aa).

The N-terminal stretch at 1 to 36 (MLSTQFNRDNQYQAITKPSLLAGCIALALLPSAAFA) is a signal peptide. A TonB box motif is present at residues 42–49 (ETVIVEGS). The segment at 48 to 72 (GSATAPDDGENDYSVTSTSAGTKMQ) is disordered. The segment covering 60-72 (YSVTSTSAGTKMQ) has biased composition (polar residues). Positions 74–183 (TQRDIPQSVT…PSAAINMVRK (110 aa)) constitute a TBDR plug domain. 6 residues coordinate Fe(III)-coprogen: arginine 117, arginine 142, tryptophan 275, tyrosine 357, asparagine 373, and tryptophan 416. Residues 189–729 (EFKGDVSAEY…NFSITGTYQF (541 aa)) enclose the TBDR beta-barrel domain. Positions 712–729 (SIVYGTPRNFSITGTYQF) match the TonB C-terminal box motif.

This sequence belongs to the TonB-dependent receptor family.

It is found in the cell outer membrane. Its function is as follows. Involved in the active transport across the outer membrane of iron complexed with linear hydroxamate siderophores coprogen, rhodotorulic acid and ferrioxamine B. Binds Fe-coprogen with high affinity, rhodotorulic acid to a lesser extent, and weakly to ferrioxamine B. Selective for planar siderophores. Does not use cyclic siderophores ferrichrome nor ferrioxamine E as substrates. The chain is Hydroxamate siderophore receptor FhuE from Escherichia coli (strain K12).